We begin with the raw amino-acid sequence, 322 residues long: Putative ankyrin repeat protein L897 (322 aa).

3 ANK repeats span residues 88-117 (DNEY…SYDM), 181-210 (NIID…FWAN), and 248-277 (NKNE…QTDH).

This chain is Putative ankyrin repeat protein L897, found in Acanthamoeba polyphaga (Amoeba).